Consider the following 410-residue polypeptide: Aspartic proteinase Asp1 (410 aa).

A signal peptide spans 1–23 (MTARLALLASLLLLLQLVPPSSA). Residues 24 to 46 (VVLELHGNVYPIGHFFVTMNIGD) constitute a propeptide, removed in mature form. In terms of domain architecture, Peptidase A1 spans 38–392 (FFVTMNIGDP…DSERSLLGWV (355 aa)). Residues aspartate 56 and aspartate 257 contribute to the active site.

It belongs to the peptidase A1 family. In terms of tissue distribution, expressed in pollen, nucellus, ovary wall, shoot and root meristem, coleoptiles of immature seeds, and somatic embryos.

Functionally, possesses protease activity in vitro. This is Aspartic proteinase Asp1 (ASP1) from Oryza sativa subsp. indica (Rice).